The primary structure comprises 169 residues: Acetolactate synthase small subunit (169 aa).

Residues 8-85 (TLSVLVEDTP…KVVEQEADNS (78 aa)) form the ACT domain.

This sequence belongs to the acetolactate synthase small subunit family. In terms of assembly, dimer of large and small chains.

The enzyme catalyses 2 pyruvate + H(+) = (2S)-2-acetolactate + CO2. It participates in amino-acid biosynthesis; L-isoleucine biosynthesis; L-isoleucine from 2-oxobutanoate: step 1/4. Its pathway is amino-acid biosynthesis; L-valine biosynthesis; L-valine from pyruvate: step 1/4. In Mycobacterium leprae (strain TN), this protein is Acetolactate synthase small subunit (ilvH).